Reading from the N-terminus, the 618-residue chain is Serine--tRNA ligase, cytoplasmic (618 aa).

417 to 419 (TSE) serves as a coordination point for L-serine. 448 to 450 (RTE) serves as a coordination point for ATP. E472 serves as a coordination point for L-serine. 536–539 (EVSS) lines the ATP pocket. Residue S570 participates in L-serine binding.

It belongs to the class-II aminoacyl-tRNA synthetase family. Type-1 seryl-tRNA synthetase subfamily. Homodimer. The tRNA molecule binds across the dimer.

It is found in the cytoplasm. The enzyme catalyses tRNA(Ser) + L-serine + ATP = L-seryl-tRNA(Ser) + AMP + diphosphate + H(+). The catalysed reaction is tRNA(Sec) + L-serine + ATP = L-seryl-tRNA(Sec) + AMP + diphosphate + H(+). Its pathway is aminoacyl-tRNA biosynthesis; selenocysteinyl-tRNA(Sec) biosynthesis; L-seryl-tRNA(Sec) from L-serine and tRNA(Sec): step 1/1. In terms of biological role, catalyzes the attachment of serine to tRNA(Ser). Is also able to aminoacylate tRNA(Sec) with serine, to form the misacylated tRNA L-seryl-tRNA(Sec), which will be further converted into selenocysteinyl-tRNA(Sec). The sequence is that of Serine--tRNA ligase, cytoplasmic from Plasmodium falciparum (isolate 3D7).